We begin with the raw amino-acid sequence, 144 residues long: Protein cornichon (144 aa).

Residues methionine 1–tyrosine 10 are Lumenal-facing. The tract at residues methionine 1–leucine 57 is interaction with grk. The helical transmembrane segment at isoleucine 11–phenylalanine 31 threads the bilayer. The Cytoplasmic portion of the chain corresponds to aspartate 32–tyrosine 56. Residues leucine 57–isoleucine 77 form a helical membrane-spanning segment. Residues asparagine 78–lysine 122 are Lumenal-facing. A helical transmembrane segment spans residues leucine 123–serine 143. Threonine 144 is a topological domain (cytoplasmic).

Belongs to the cornichon family. Interacts with grk. As to expression, expressed in male and female somatic tissues.

It localises to the endoplasmic reticulum membrane. Functionally, acts as a cargo receptor necessary for the transportation of gurken (grk) to a transitional endoplasmic reticulum (tER) site and promotes its incorporation into coat protein complex II (COPII) vesicles. Associated with gurken, produces a signal received by torpedo resulting in a signaling pathway that first establishes posterior follicle cell fates and normal localization of the anterior and posterior determinants, later they act in a signaling event inducing dorsal follicle cell fates and regulating the dorsal-ventral pattern of egg and embryo. In Drosophila melanogaster (Fruit fly), this protein is Protein cornichon (cni).